A 494-amino-acid polypeptide reads, in one-letter code: Sulfate adenylyltransferase subunit 1 (494 aa).

A tr-type G domain is found at 24-240 (TRPLRLITCG…LELATVRSAQ (217 aa)). The interval 33–40 (GSVDDGKS) is G1. 33–40 (GSVDDGKS) lines the GTP pocket. A G2 region spans residues 91 to 95 (GITID). The G3 stretch occupies residues 112–115 (DTPG). GTP-binding positions include 112 to 116 (DTPGH) and 167 to 170 (NKID). A G4 region spans residues 167-170 (NKID). The tract at residues 204–206 (SAL) is G5.

This sequence belongs to the TRAFAC class translation factor GTPase superfamily. Classic translation factor GTPase family. CysN/NodQ subfamily. As to quaternary structure, heterodimer composed of CysD, the smaller subunit, and CysN.

The catalysed reaction is sulfate + ATP + H(+) = adenosine 5'-phosphosulfate + diphosphate. Its pathway is sulfur metabolism; hydrogen sulfide biosynthesis; sulfite from sulfate: step 1/3. In terms of biological role, with CysD forms the ATP sulfurylase (ATPS) that catalyzes the adenylation of sulfate producing adenosine 5'-phosphosulfate (APS) and diphosphate, the first enzymatic step in sulfur assimilation pathway. APS synthesis involves the formation of a high-energy phosphoric-sulfuric acid anhydride bond driven by GTP hydrolysis by CysN coupled to ATP hydrolysis by CysD. The sequence is that of Sulfate adenylyltransferase subunit 1 from Rhizobium tropici.